Here is a 66-residue protein sequence, read N- to C-terminus: Beta-toxin Cb3 (66 aa).

Residues 1 to 66 enclose the LCN-type CS-alpha/beta domain; it reads KEGYIVNYYD…VWPLPNKTCL (66 aa). 4 cysteine pairs are disulfide-bonded: cysteine 12–cysteine 65, cysteine 16–cysteine 41, cysteine 25–cysteine 46, and cysteine 29–cysteine 48.

The protein belongs to the long (4 C-C) scorpion toxin superfamily. Sodium channel inhibitor family. Beta subfamily. Expressed by the venom gland.

The protein localises to the secreted. Functionally, beta toxins bind voltage-independently at site-4 of sodium channels (Nav) and reduces peak current and shifts the voltage of activation toward more negative potentials thereby affecting sodium channel activation and promoting spontaneous and repetitive firing. Has an inhibitory effect on voltage-gated sodium channels hNav1.1/SCN1A, hNav1.2/SCN2A, hNav1.4/SCN4A and hNav1.6/SCN8A. Reduces the peak current of hNav1.5/SCN5A but does not shift its voltage of activation. Also affects the inactivation processes of hNav1.1/SCN1A, hNav1.4/SCN4A, hNav1.5/SCN5A and hNav1.6/SCN8A. This toxin is active against mammals and lethal to mice. In Centruroides baergi (Scorpion), this protein is Beta-toxin Cb3.